Here is a 72-residue protein sequence, read N- to C-terminus: SRY-related protein ADW5 (72 aa).

A DNA-binding region (HMG box) is located at residues 1 to 69; sequence VKRPMNAFMV…KHMADYPDYK (69 aa).

The protein localises to the nucleus. The polypeptide is SRY-related protein ADW5 (Alligator mississippiensis (American alligator)).